Here is a 448-residue protein sequence, read N- to C-terminus: Solute carrier family 52, riboflavin transporter, member 2 (448 aa).

Transmembrane regions (helical) follow at residues 14–34 (LLVA…WVEL), 47–67 (LPSY…VVTL), 79–99 (VPIQ…APLW), 105–125 (VAGQ…ALAC), and 147–167 (FFLG…VQGV). N-linked (GlcNAc...) asparagine glycosylation is present at asparagine 178. Residues 198-218 (WALTALLVTSAAAFQGLLLLL) traverse the membrane as a helical segment. A disordered region spans residues 228–267 (GAGPELPLGSPGAEEEEKEEEEALPLQEPPSQAAGTIPGP). A compositionally biased stretch (acidic residues) spans 240–250 (AEEEEKEEEEA). Helical transmembrane passes span 280–300 (AFLL…LPAV), 315–335 (LAVV…MGVL), 342–362 (LVGL…LAIL), 369–389 (VGTT…LCVF), and 407–427 (ALLA…GTMF).

This sequence belongs to the riboflavin transporter family.

It localises to the cell membrane. The enzyme catalyses riboflavin(in) = riboflavin(out). Riboflavin transport is Na(+)-independent but moderately pH-sensitive. Activity is strongly inhibited by riboflavin analogs, such as lumiflavin. Weakly inhibited by flavin adenine dinucleotide (FAD) and flavin mononucleotide (FMN). Its function is as follows. Plasma membrane transporter mediating the uptake by cells of the water soluble vitamin B2/riboflavin that plays a key role in biochemical oxidation-reduction reactions of the carbohydrate, lipid, and amino acid metabolism. May also act as a receptor for 4-hydroxybutyrate. (Microbial infection) In case of infection by retroviruses, acts as a cell receptor to retroviral envelopes similar to the porcine endogenous retrovirus (PERV-A). The protein is Solute carrier family 52, riboflavin transporter, member 2 (SLC52A2) of Papio hamadryas (Hamadryas baboon).